A 1628-amino-acid chain; its full sequence is THO complex subunit 2 (1628 aa).

Basic and acidic residues-rich tracts occupy residues Met1 to Gln10 and Thr1360 to Arg1399. 2 disordered regions span residues Met1 to Lys21 and Val1337 to Gln1628. Thr1406 and Thr1408 each carry phosphothreonine. Residues Asp1411–Pro1429 show a composition bias toward basic and acidic residues. A compositionally biased stretch (polar residues) spans Gln1430–Ser1444. The span at Ala1461–Arg1474 shows a compositional bias: basic and acidic residues. Over residues Asn1476 to Val1493 the composition is skewed to low complexity. Residues Ser1494–Ile1526 are compositionally biased toward basic and acidic residues. The segment covering Ser1527–Gly1550 has biased composition (polar residues). The span at Asn1551–Arg1560 shows a compositional bias: basic and acidic residues. At Ser1577 the chain carries Phosphoserine. Basic and acidic residues predominate over residues Leu1581 to Gln1628.

This sequence belongs to the THOC2 family. As to quaternary structure, component of the THO complex. THO associates with DNA and RNA in vitro.

The protein localises to the nucleus. Component the THO subcomplex of the TREX complex, which operates in coupling transcription elongation to mRNA export. The THO complex is recruited to transcribed genes and moves along the gene with the elongating polymerase during transcription. THO is important for stabilizing nascent RNA in the RNA polymerase II elongation complex by preventing formation of DNA:RNA hybrids behind the elongating polymerase. The protein is THO complex subunit 2 (tho2) of Schizosaccharomyces pombe (strain 972 / ATCC 24843) (Fission yeast).